We begin with the raw amino-acid sequence, 370 residues long: Uroporphyrinogen decarboxylase (370 aa).

Residues 29-33, D79, Y155, S210, and H342 each bind substrate; that span reads RQAGR.

The protein belongs to the uroporphyrinogen decarboxylase family. As to quaternary structure, homodimer.

It localises to the cytoplasm. It catalyses the reaction uroporphyrinogen III + 4 H(+) = coproporphyrinogen III + 4 CO2. It functions in the pathway porphyrin-containing compound metabolism; protoporphyrin-IX biosynthesis; coproporphyrinogen-III from 5-aminolevulinate: step 4/4. Its function is as follows. Catalyzes the decarboxylation of four acetate groups of uroporphyrinogen-III to yield coproporphyrinogen-III. The protein is Uroporphyrinogen decarboxylase of Verminephrobacter eiseniae (strain EF01-2).